The sequence spans 633 residues: Pentatricopeptide repeat-containing protein At3g24000, mitochondrial (633 aa).

A mitochondrion-targeting transit peptide spans 1–63 (MALRFPPRLL…SYIPADRRFY (63 aa)). PPR repeat units follow at residues 94–124 (DIVMGNTLLNMYAKCGSLEEARKVFEKMPQR), 125–159 (DFVTWTTLISGYSQHDRPCDALLFFNQMLRFGYSP), 160–194 (NEFTLSSVIKAAAAERRGCCGHQLHGFCVKCGFDS), 195–225 (NVHVGSALLDLYTRYGLMDDAQLVFDALESR), 226–260 (NDVSWNALIAGHARRSGTEKALELFQGMLRDGFRP), 261–295 (SHFSYASLFGACSSTGFLEQGKWVHAYMIKSGEKL), 296–326 (VAFAGNTLLDMYAKSGSIHDARKIFDRLAKR), 327–361 (DVVSWNSLLTAYAQHGFGKEAVWWFEEMRRVGIRP), 362–396 (NEISFLSVLTACSHSGLLDEGWHYYELMKKDGIVP), and 397–431 (EAWHYVTVVDLLGRAGDLNRALRFIEEMPIEPTAA). Residues 432–507 (IWKALLNACR…EPACSWVEIE (76 aa)) are type E motif. The type E(+) motif stretch occupies residues 508–538 (NAIHMFVANDERHPQREEIARKWEEVLAKIK). The segment at 539 to 633 (ELGYVPDTSH…DGNCSCKDYW (95 aa)) is type DYW motif.

It belongs to the PPR family. PCMP-H subfamily.

It is found in the mitochondrion. This Arabidopsis thaliana (Mouse-ear cress) protein is Pentatricopeptide repeat-containing protein At3g24000, mitochondrial (PCMP-H87).